The primary structure comprises 733 residues: Polyribonucleotide nucleotidyltransferase (733 aa).

Residues Asp-488 and Asp-494 each contribute to the Mg(2+) site. The region spanning 555 to 614 (PRIEVMNIAVDKIRDVIGTGGKVIREIVEQTGAKINIEDDGTIRIASADAKTIEAAKRWI) is the KH domain. Positions 624 to 692 (GVIYQGTVVK…ERGKVRLSMK (69 aa)) constitute an S1 motif domain. The span at 711 to 722 (EQEKYTEETHKS) shows a compositional bias: basic and acidic residues. Positions 711–733 (EQEKYTEETHKSENKRRRKKKEE) are disordered. The segment covering 723 to 733 (ENKRRRKKKEE) has biased composition (basic residues).

This sequence belongs to the polyribonucleotide nucleotidyltransferase family. It depends on Mg(2+) as a cofactor.

The protein localises to the cytoplasm. The catalysed reaction is RNA(n+1) + phosphate = RNA(n) + a ribonucleoside 5'-diphosphate. In terms of biological role, involved in mRNA degradation. Catalyzes the phosphorolysis of single-stranded polyribonucleotides processively in the 3'- to 5'-direction. This is Polyribonucleotide nucleotidyltransferase from Bartonella henselae (strain ATCC 49882 / DSM 28221 / CCUG 30454 / Houston 1) (Rochalimaea henselae).